The primary structure comprises 111 residues: Antitoxin PrlF (111 aa).

In terms of domain architecture, SpoVT-AbrB spans 12-59 (TTESKVTIRGQTTIPAPVREALKLKPGLDSIHYEILPGGQVFMCRLGD).

In terms of assembly, homodimer; forms a complex with YhaV with stoichiometry PrlF(2)-YhaV(4), possibly as a YhaV(2)-PrlF(2)-YhaV(2) complex like the MazFE complex.

The protein localises to the cytoplasm. Functionally, antitoxin component of a type II toxin-antitoxin (TA) system. Labile antitoxin that binds to the YhaV toxin and neutralizes its ribonuclease activity. Also acts as a transcription factor. The YhaV/PrlF complex binds the prlF-yhaV operon, probably negatively regulating its expression. This Escherichia coli O6:H1 (strain CFT073 / ATCC 700928 / UPEC) protein is Antitoxin PrlF (prlF).